Consider the following 139-residue polypeptide: MANSSSGLAVSDECKVKFRDLKARRSFRFIVFRIDDKDMEIKVDRLGEPNQGYGDFTDSLPADECRYAIYDLDFTTVENCQKSKIFFFSWSPDTARTRSKMLYASSKDRFRRELDGIQCEIQATDPSEMSLDIVKSRTN.

The region spanning 7–139 (GLAVSDECKV…SLDIVKSRTN (133 aa)) is the ADF-H domain.

This sequence belongs to the actin-binding proteins ADF family. Expressed in pollen.

Its function is as follows. Actin-depolymerizing protein. Severs actin filaments (F-actin) and binds to actin monomers. In Zea mays (Maize), this protein is Actin-depolymerizing factor 2 (ADF2).